A 387-amino-acid polypeptide reads, in one-letter code: Cystathionine beta-lyase (387 aa).

Position 204 is an N6-(pyridoxal phosphate)lysine (Lys204).

The protein belongs to the trans-sulfuration enzymes family. As to quaternary structure, homotetramer. It depends on pyridoxal 5'-phosphate as a cofactor.

The protein localises to the cytoplasm. The catalysed reaction is L,L-cystathionine + H2O = L-homocysteine + pyruvate + NH4(+). It catalyses the reaction an S-substituted L-cysteine + H2O = a thiol + pyruvate + NH4(+). It participates in amino-acid biosynthesis; L-methionine biosynthesis via de novo pathway; L-homocysteine from L-cystathionine: step 1/1. Its function is as follows. Catalyzes the cleavage of cystathionine to homocysteine, pyruvate and ammonia during methionine biosynthesis. The chain is Cystathionine beta-lyase (metC) from Coxiella burnetii (strain RSA 493 / Nine Mile phase I).